Consider the following 45-residue polypeptide: MTKRTLGGTSRKRKRVSGFRVRMRSHTGRRVIRTRRKRGRTRLAV.

The segment at 1 to 27 (MTKRTLGGTSRKRKRVSGFRVRMRSHT) is disordered. A compositionally biased stretch (basic residues) spans 10–27 (SRKRKRVSGFRVRMRSHT).

It belongs to the bacterial ribosomal protein bL34 family.

The polypeptide is Large ribosomal subunit protein bL34 (Synechococcus sp. (strain CC9902)).